A 365-amino-acid chain; its full sequence is uncharacterized protein (365 aa).

2 stretches are compositionally biased toward basic and acidic residues: residues 1-27 (MDNVQEHDPDTQEHNNETQNHKQEDHS) and 315-339 (AKDDEQYAKRLAKEEEERGKKETPK). Disordered regions lie at residues 1 to 31 (MDNVQEHDPDTQEHNNETQNHKQEDHSNSYQ) and 308 to 365 (KEEK…CLIS). Polar residues predominate over residues 340–353 (KASNTPRRNKSNTQ).

This sequence to yeast YGL082w. Interacts with sad1.

It localises to the cytoplasm. This is an uncharacterized protein from Schizosaccharomyces pombe (strain 972 / ATCC 24843) (Fission yeast).